A 476-amino-acid polypeptide reads, in one-letter code: Aspartyl/glutamyl-tRNA(Asn/Gln) amidotransferase subunit B (476 aa).

It belongs to the GatB/GatE family. GatB subfamily. Heterotrimer of A, B and C subunits.

The enzyme catalyses L-glutamyl-tRNA(Gln) + L-glutamine + ATP + H2O = L-glutaminyl-tRNA(Gln) + L-glutamate + ADP + phosphate + H(+). The catalysed reaction is L-aspartyl-tRNA(Asn) + L-glutamine + ATP + H2O = L-asparaginyl-tRNA(Asn) + L-glutamate + ADP + phosphate + 2 H(+). Allows the formation of correctly charged Asn-tRNA(Asn) or Gln-tRNA(Gln) through the transamidation of misacylated Asp-tRNA(Asn) or Glu-tRNA(Gln) in organisms which lack either or both of asparaginyl-tRNA or glutaminyl-tRNA synthetases. The reaction takes place in the presence of glutamine and ATP through an activated phospho-Asp-tRNA(Asn) or phospho-Glu-tRNA(Gln). The polypeptide is Aspartyl/glutamyl-tRNA(Asn/Gln) amidotransferase subunit B (Clostridium botulinum (strain Alaska E43 / Type E3)).